A 415-amino-acid chain; its full sequence is Plant UBX domain-containing protein 16 (415 aa).

One can recognise a UBA domain in the interval 19–69; sequence QLDEEIVLFRQDQLISSFLEIAVDQTAETARILLQTTDWNIDQAVNLFLTN. The 81-residue stretch at 333 to 413 folds into the UBX domain; it reads DRSVVCSLCV…GLANSLISVT (81 aa).

In Arabidopsis thaliana (Mouse-ear cress), this protein is Plant UBX domain-containing protein 16.